The primary structure comprises 525 residues: Golgi resident protein GCP60 (525 aa).

Position 2 is an N-acetylalanine (Ala-2). Positions 12–68 (VSLDGLTLSPDSEERPGAEGAPPQTPPSSAPGNGLGSGASGQQREPGEAAAEGAAEE) are disordered. Position 13 is a phosphoserine (Ser-13). Thr-18 is modified (phosphothreonine). Ser-20 and Ser-40 each carry phosphoserine. Residues 52-64 (GQQREPGEAAAEG) show a composition bias toward low complexity. The ACB domain maps to 80–171 (LEELYGLALR…LNKCCPLLSA (92 aa)). The stretch at 169–254 (LSAYVASHRI…AALNSQTAVQ (86 aa)) forms a coiled coil. Positions 180–226 (KEEEEKRRKAEEERRQREEEERERLQKEEEKRKREKEDRLRREEEER) are disordered. A q domain; Interaction with PI4KB, TBC1D22A and TBC1D22B region spans residues 238 to 305 (QQKQQIMAAL…QQQAALQKQQ (68 aa)). Polar residues predominate over residues 319–336 (KVNTAGASDTLSVNGQAK). A disordered region spans residues 319-346 (KVNTAGASDTLSVNGQAKTHTENSEKVL). The span at 337-346 (THTENSEKVL) shows a compositional bias: basic and acidic residues. The GOLD domain maps to 381–523 (KEKIRQDADS…SKSVYYRVYY (143 aa)). The stretch at 448 to 470 (SDEEEEEEENVTCEEKAKKNANK) forms a coiled coil.

As to quaternary structure, homodimer. Interacts with the C-terminal cytoplasmic domain of giantin/GOLGB1. Interacts with PBR and PKA regulatory subunit RI-alpha. Does not interact with PKA regulatory subunit RI-beta nor PKA regulatory subunit RII-alpha. Interacts (via Q domain) with PI4KB (via N-terminus). Interacts (via Q domain) with TBC1D22A and TBC1D22B; interactions with PI4KB and with TBC1D22A and TBC1D22B are mutually exclusive. Interacts with C10ORF76 and RAB11B. As to expression, expressed in brain (hippocampus, olfactory bulb, neuronal and glial cells of the cortex), eye, submaxillary gland, testis (interstitial and tubular compartments), ovary (granulosa cells, theca cells at late stages and primary follicles), adrenal gland (fasciculata and glomerulosa cells), heart, liver, and steroidogenic cell lines.

The protein resides in the golgi apparatus membrane. Its subcellular location is the mitochondrion. In terms of biological role, involved in the maintenance of Golgi structure by interacting with giantin, affecting protein transport between the endoplasmic reticulum and Golgi. Involved in hormone-induced steroid biosynthesis in testicular Leydig cells. Recruits PI4KB to the Golgi apparatus membrane; enhances the enzyme activity of PI4KB activity via its membrane recruitment thereby increasing the local concentration of the substrate in the vicinity of the kinase. The protein is Golgi resident protein GCP60 (Acbd3) of Mus musculus (Mouse).